A 484-amino-acid chain; its full sequence is Transcription factor TGAL4 (484 aa).

Over residues 1 to 11 the composition is skewed to polar residues; the sequence is MGEASSSSGHP. Disordered regions lie at residues 1–22, 84–137, and 155–181; these read MGEA…GYGF, ATAA…NASS, and QQEQ…DPKT. Over residues 123 to 137 the composition is skewed to low complexity; that stretch reads SESSSKNNSNQNASS. Residues 163 to 173 show a composition bias toward polar residues; sequence ATNSPTHSSKT. One can recognise a bZIP domain in the interval 178–222; it reads DPKTMRRLAQNREAARKSRLRKKAYIQQLESSKLKLAQMEQDIHR. A basic motif region spans residues 180-200; sequence KTMRRLAQNREAARKSRLRKK. The interval 206–220 is leucine-zipper; the sequence is LESSKLKLAQMEQDI. The 215-residue stretch at 241–455 folds into the DOG1 domain; it reads AAMFDVDYAR…RALSSLWASR (215 aa).

It belongs to the bZIP family. As to quaternary structure, interacts with NPR1/NH1 and NPR3/NH3.

Its subcellular location is the nucleus. In terms of biological role, transcriptional regulator involved in defense response. The chain is Transcription factor TGAL4 from Oryza sativa subsp. japonica (Rice).